The sequence spans 280 residues: Fe-S cluster assembly protein DRE2 (280 aa).

Residues Met-1 to Gly-121 are N-terminal SAM-like domain. Residues Pro-122 to Leu-176 form a linker region. [2Fe-2S] cluster is bound by residues Cys-186, Cys-198, Cys-201, and Cys-203. Residues Cys-186 to Cys-203 form a fe-S binding site A region. The [4Fe-4S] cluster site is built by Cys-244, Cys-247, Cys-255, and Cys-258. Short sequence motifs (cx2C motif) lie at residues Cys-244–Cys-247 and Cys-255–Cys-258. A fe-S binding site B region spans residues Cys-244 to Cys-258.

It belongs to the anamorsin family. In terms of assembly, monomer. Interacts with TAH18. Interacts with MIA40. Requires [2Fe-2S] cluster as cofactor. The cofactor is [4Fe-4S] cluster.

The protein localises to the cytoplasm. Its subcellular location is the mitochondrion intermembrane space. In terms of biological role, component of the cytosolic iron-sulfur (Fe-S) protein assembly (CIA) machinery required for the maturation of extramitochondrial Fe-S proteins. Part of an electron transfer chain functioning in an early step of cytosolic Fe-S biogenesis, facilitating the de novo assembly of a [4Fe-4S] cluster on the scaffold complex CFD1-NBP35. Electrons are transferred to DRE2 from NADPH via the FAD- and FMN-containing protein TAH18. TAH18-DRE2 are also required for the assembly of the diferric tyrosyl radical cofactor of ribonucleotide reductase (RNR), probably by providing electrons for reduction during radical cofactor maturation in the catalytic small subunit RNR2. The protein is Fe-S cluster assembly protein DRE2 of Yarrowia lipolytica (strain CLIB 122 / E 150) (Yeast).